Consider the following 64-residue polypeptide: Translation machinery-associated protein 7 homolog (64 aa).

The disordered stretch occupies residues 1–64 (MTGREGGKKK…TGGIKKSGKK (64 aa)). Residues 21–50 (EMDEEDMAFKQKQKEQQKAMEAAKQKAAKG) adopt a coiled-coil conformation. A compositionally biased stretch (basic and acidic residues) spans 27 to 44 (MAFKQKQKEQQKAMEAAK).

Belongs to the TMA7 family.

This Aedes aegypti (Yellowfever mosquito) protein is Translation machinery-associated protein 7 homolog.